The primary structure comprises 588 residues: UvrABC system protein C (588 aa).

The region spanning 12 to 89 (SKPGCYLYLN…IKKYRPKYNV (78 aa)) is the GIY-YIG domain. One can recognise a UVR domain in the interval 194 to 229 (NEVKTLLTNQMHKAAENLQFEEAQRIKEQIISLDFT).

It belongs to the UvrC family. As to quaternary structure, interacts with UvrB in an incision complex.

The protein resides in the cytoplasm. Functionally, the UvrABC repair system catalyzes the recognition and processing of DNA lesions. UvrC both incises the 5' and 3' sides of the lesion. The N-terminal half is responsible for the 3' incision and the C-terminal half is responsible for the 5' incision. In Mesoplasma florum (strain ATCC 33453 / NBRC 100688 / NCTC 11704 / L1) (Acholeplasma florum), this protein is UvrABC system protein C.